The chain runs to 70 residues: Conotoxin Lt3.4 (70 aa).

The first 24 residues, 1 to 24 (MLKMGVLLFTFLVLFPLAMFQLDA), serve as a signal peptide directing secretion. The propeptide occupies 25–54 (DQPVERYAENKQDLNRDERMKIMLSALRQR). Gln-55 carries the pyrrolidone carboxylic acid modification. Cystine bridges form between Cys-56-Cys-68, Cys-57-Cys-66, and Cys-62-Cys-69.

It belongs to the conotoxin M superfamily. As to expression, expressed by the venom duct.

The protein resides in the secreted. In Conus litteratus (Lettered cone), this protein is Conotoxin Lt3.4.